The following is a 498-amino-acid chain: Hyaluronan-mediated motility receptor (498 aa).

The segment at 150 to 331 (EEMTSERNVF…ITDLQNQLRQ (182 aa)) is required for interaction with FAM83D. 2 N-linked (GlcNAc...) asparagine glycosylation sites follow: N262 and N302. 2 hyaluronic acid-binding regions span residues 420 to 430 (KQKIKHVVKLK) and 442 to 451 (KLRSQLAKRK). A glycan (N-linked (GlcNAc...) asparagine) is linked at N483. Phosphothreonine is present on T488.

Interacts with ANKRD26. Interacts with DYNLL1. Interacts with FAM83D/CHICA.

The protein resides in the cell surface. The protein localises to the cytoplasm. Its subcellular location is the cytoskeleton. It is found in the spindle. Receptor for hyaluronic acid (HA). Involved in cell motility. When hyaluronan binds to HMMR, the phosphorylation of a number of proteins, including the PTK2/FAK1 occurs. May also be involved in cellular transformation and metastasis formation, and in regulating extracellular-regulated kinase (ERK) activity. May act as a regulator of adipogenisis. This chain is Hyaluronan-mediated motility receptor (Hmmr), found in Rattus norvegicus (Rat).